We begin with the raw amino-acid sequence, 218 residues long: Glutathione S-transferase Mu 1 (218 aa).

The GST N-terminal domain occupies 2 to 88; it reads PMILGYWDIR…YIARKHNLCG (87 aa). A glutathione-binding site is contributed by 7-8; the sequence is YW. Thr34 is modified (phosphothreonine). Residues 43-46, Lys50, 59-60, and 72-73 contribute to the glutathione site; these read RSQW, NL, and QS. The region spanning 90 to 208 is the GST C-terminal domain; it reads TEEEKIRVDI…KSSRFLPRPV (119 aa). Tyr116 lines the substrate pocket. Ser210 bears the Phosphoserine mark.

It belongs to the GST superfamily. Mu family. Homodimer. Liver (at protein level).

It is found in the cytoplasm. It catalyses the reaction RX + glutathione = an S-substituted glutathione + a halide anion + H(+). The catalysed reaction is prostaglandin A2 + glutathione = prostaglandin A2-S-(R)-glutathione. It carries out the reaction prostaglandin J2 + glutathione = prostaglandin J2-S-(R)-glutathione. The enzyme catalyses prostaglandin J2 + glutathione = prostaglandin J2-S-(S)-glutathione. It catalyses the reaction prostaglandin A2 + glutathione = prostaglandin A2-S-(S)-glutathione. The catalysed reaction is 11(S)-hydroxy-14(S),15(S)-epoxy-(5Z,8Z,12E)-eicosatrienoate + glutathione = (11S,15S)-dihydroxy-14(R)-S-glutathionyl-(5Z,8Z,12E)-eicosatrienoate. Conjugation of reduced glutathione to a wide number of exogenous and endogenous hydrophobic electrophiles. Involved in the formation of glutathione conjugates of both prostaglandin A2 (PGA2) and prostaglandin J2 (PGJ2). Participates in the formation of novel hepoxilin regioisomers. In Homo sapiens (Human), this protein is Glutathione S-transferase Mu 1.